The sequence spans 340 residues: Delta(1)-pyrroline-2-carboxylate reductase 1 (340 aa).

The active-site Charge relay system is the Ser-50. Residue His-51 is the Proton donor of the active site. Arg-55 is a substrate binding site. 123–127 (HFSAL) lines the NADP(+) pocket. Position 163 (Thr-163) interacts with substrate. Residue 181-183 (DFA) coordinates NADP(+). 189–190 (RG) is a binding site for substrate. The Charge relay system role is filled by Asp-191. NADP(+)-binding positions include 232–233 (HK) and 307–313 (RLPSQRR).

Belongs to the LDH2/MDH2 oxidoreductase family. In terms of assembly, homodimer.

The enzyme catalyses L-proline + NAD(+) = 1-pyrroline-2-carboxylate + NADH + H(+). It carries out the reaction L-proline + NADP(+) = 1-pyrroline-2-carboxylate + NADPH + H(+). In terms of biological role, catalyzes the reduction of Delta(1)-pyrroline-2-carboxylate (Pyr2C) to L-proline, using NADPH as the electron donor. May be involved in a degradation pathway that converts trans-3-hydroxy-L-proline (t3LHyp) to L-proline. This is Delta(1)-pyrroline-2-carboxylate reductase 1 from Burkholderia ambifaria (strain ATCC BAA-244 / DSM 16087 / CCUG 44356 / LMG 19182 / AMMD) (Burkholderia cepacia (strain AMMD)).